We begin with the raw amino-acid sequence, 549 residues long: Thermosome subunit alpha (549 aa).

The tract at residues 529-549 (EGRQGAECPPNGCMGGMDMRM) is disordered.

It belongs to the TCP-1 chaperonin family. Forms a Heterooligomeric complex of two stacked eight-membered rings.

Functionally, molecular chaperone; binds unfolded polypeptides in vitro, and has a weak ATPase activity. The chain is Thermosome subunit alpha (thsA) from Thermococcus sp. (strain KS-8).